A 264-amino-acid chain; its full sequence is Thymidylate synthase (264 aa).

Arginine 21 lines the dUMP pocket. Histidine 51 is a binding site for (6R)-5,10-methylene-5,6,7,8-tetrahydrofolate. A dUMP-binding site is contributed by 126–127 (RR). The active-site Nucleophile is cysteine 146. Residues 166 to 169 (RSAD), asparagine 177, and 207 to 209 (HIY) each bind dUMP. Aspartate 169 is a (6R)-5,10-methylene-5,6,7,8-tetrahydrofolate binding site. Alanine 263 serves as a coordination point for (6R)-5,10-methylene-5,6,7,8-tetrahydrofolate.

Belongs to the thymidylate synthase family. Bacterial-type ThyA subfamily. As to quaternary structure, homodimer.

It is found in the cytoplasm. The catalysed reaction is dUMP + (6R)-5,10-methylene-5,6,7,8-tetrahydrofolate = 7,8-dihydrofolate + dTMP. Its pathway is pyrimidine metabolism; dTTP biosynthesis. In terms of biological role, catalyzes the reductive methylation of 2'-deoxyuridine-5'-monophosphate (dUMP) to 2'-deoxythymidine-5'-monophosphate (dTMP) while utilizing 5,10-methylenetetrahydrofolate (mTHF) as the methyl donor and reductant in the reaction, yielding dihydrofolate (DHF) as a by-product. This enzymatic reaction provides an intracellular de novo source of dTMP, an essential precursor for DNA biosynthesis. The polypeptide is Thymidylate synthase (Bacteroides fragilis (strain ATCC 25285 / DSM 2151 / CCUG 4856 / JCM 11019 / LMG 10263 / NCTC 9343 / Onslow / VPI 2553 / EN-2)).